Reading from the N-terminus, the 685-residue chain is Probable transcriptional regulator SLK3 (685 aa).

Disordered regions lie at residues 25–66 (NLPG…ENSY) and 108–129 (LQQQ…SQRL). Residues 39 to 56 (QHLPQQQQRQLLEQQAGQ) are compositionally biased toward low complexity. A dimerization region spans residues 176 to 423 (PAENCITYWR…EHKVGPLEGL (248 aa)). Residues 185–199 (RKFVAEYFSPRAKQR) carry the Nuclear localization signal motif. The segment covering 447 to 459 (GNSGAMSGPAQAQ) has biased composition (polar residues). 3 disordered regions span residues 447 to 491 (GNSG…MNGS), 512 to 591 (NNQN…NTQE), and 611 to 658 (QQQA…NNLP). The span at 460–471 (MTLSSGTMSGST) shows a compositional bias: low complexity. Positions 512–524 (NNQNSNTGNQEGF) are enriched in polar residues. Residues 525–543 (SSQNPTLNSNQSPSSSSQQ) show a composition bias toward low complexity. Composition is skewed to polar residues over residues 544–588 (RENL…SHGN), 611–636 (QQQA…TSNI), and 645–658 (RINS…NNLP).

Belongs to the adn1/SEU family.

Its subcellular location is the nucleus. Probable transcription regulator that functions in the development of the carpel margin meristem similarly to SEUSS (SEU). In association with SEU, supports organ development from meristematic regions by facilitating auxin response and thus organ initiation, and by sustaining meristematic potential through the maintenance of PHABULOSA expression. The sequence is that of Probable transcriptional regulator SLK3 (SLK3) from Arabidopsis thaliana (Mouse-ear cress).